The chain runs to 702 residues: Polynucleotide 5'-hydroxyl-kinase NOL9 (702 aa).

Alanine 2 is modified (N-acetylalanine). Residues 31 to 47 (RRPRRRLGSLRWCGRRR) carry the Nucleolar localization signal motif. The disordered stretch occupies residues 69–101 (VSRAAAARRPNTATPSPIPSPTPASEPESEPEL). Residues 71–83 (RAAAARRPNTATP) are compositionally biased toward low complexity. 306-313 (GSQDVGKS) contacts ATP. An interaction with LAS1L region spans residues 480–702 (FADEEKESPV…RRPKFCRKMK (223 aa)). A Glycyl lysine isopeptide (Lys-Gly) (interchain with G-Cter in SUMO2) cross-link involves residue lysine 485. Residue serine 487 is modified to Phosphoserine. Positions 680–689 (AREPEEAHKE) are enriched in basic and acidic residues. A disordered region spans residues 680–702 (AREPEEAHKEKPYRRPKFCRKMK). Over residues 690–702 (KPYRRPKFCRKMK) the composition is skewed to basic residues.

It belongs to the Clp1 family. NOL9/GRC3 subfamily. Interacts with PELP1, WDR18 and SENP3. Interacts with LAS1L to form an ITS2 pre-rRNA endonuclease-kinase complex.

Its subcellular location is the nucleus. The protein localises to the nucleolus. The enzyme catalyses a 5'-end dephospho-2'-deoxyribonucleoside-DNA + ATP = a 5'-end 5'-phospho-2'-deoxyribonucleoside-DNA + ADP + H(+). The catalysed reaction is a 5'-end dephospho-ribonucleoside-RNA + ATP = a 5'-end 5'-phospho-ribonucleoside-RNA + ADP + H(+). In terms of biological role, polynucleotide kinase that can phosphorylate the 5'-hydroxyl groups of single-stranded and double-stranded RNA and DNA substrates. Involved in rRNA processing and its kinase activity is required for the processing of the 32S precursor into 5.8S and 28S rRNAs, more specifically for the generation of the major 5.8S(S) form. Required for the efficient pre-rRNA processing of internal transcribed spacer 2 (ITS2). Associates with LAS1L to form an ITS2 pre-rRNA endonuclease-kinase complex and is responsible for the transport of this complex into the nucleolus. In Homo sapiens (Human), this protein is Polynucleotide 5'-hydroxyl-kinase NOL9 (NOL9).